Consider the following 104-residue polypeptide: Large ribosomal subunit protein bL21 (104 aa).

Belongs to the bacterial ribosomal protein bL21 family. As to quaternary structure, part of the 50S ribosomal subunit. Contacts protein L20.

This protein binds to 23S rRNA in the presence of protein L20. This Kosmotoga olearia (strain ATCC BAA-1733 / DSM 21960 / TBF 19.5.1) protein is Large ribosomal subunit protein bL21.